Here is a 74-residue protein sequence, read N- to C-terminus: MKEGIHPEYHEITVTCSCGNEFKTRSVLSKPLHIEVCSSCHPFYTGKQKIVDTAGRVEKFNQKYGRHLQKQAQT.

The Zn(2+) site is built by Cys16, Cys18, Cys37, and Cys40.

This sequence belongs to the bacterial ribosomal protein bL31 family. Type A subfamily. In terms of assembly, part of the 50S ribosomal subunit. Requires Zn(2+) as cofactor.

Binds the 23S rRNA. The sequence is that of Large ribosomal subunit protein bL31 from Nitrosomonas europaea (strain ATCC 19718 / CIP 103999 / KCTC 2705 / NBRC 14298).